The primary structure comprises 421 residues: PDZ and LIM domain protein 7 (421 aa).

A PDZ domain is found at 1 to 85 (MEEYKVTLDG…KLGLVLSRFA (85 aa)). The tract at residues 115–193 (IARPFGSGTP…STGPAVRPPW (79 aa)) is disordered. Polar residues predominate over residues 147-172 (YPSSQMPQGQLQNGQKSRTVSNVSGK). LIM zinc-binding domains are found at residues 244–302 (PVCS…ARFA), 303–362 (PNCA…MFGT), and 363–421 (KCRG…FSNV).

The protein resides in the cytoplasm. It is found in the cytoskeleton. May function as a scaffold on which the coordinated assembly of proteins can occur. May play a role as an adapter that, via its PDZ domain, localizes LIM-binding proteins to actin filaments of both skeletal muscle and nonmuscle tissues. This chain is PDZ and LIM domain protein 7 (pdlim7), found in Xenopus laevis (African clawed frog).